The sequence spans 110 residues: Phosphoribosyl-ATP pyrophosphatase (110 aa).

It belongs to the PRA-PH family.

It localises to the cytoplasm. It catalyses the reaction 1-(5-phospho-beta-D-ribosyl)-ATP + H2O = 1-(5-phospho-beta-D-ribosyl)-5'-AMP + diphosphate + H(+). It functions in the pathway amino-acid biosynthesis; L-histidine biosynthesis; L-histidine from 5-phospho-alpha-D-ribose 1-diphosphate: step 2/9. The sequence is that of Phosphoribosyl-ATP pyrophosphatase from Pseudomonas syringae pv. tomato (strain ATCC BAA-871 / DC3000).